We begin with the raw amino-acid sequence, 322 residues long: HPr kinase/phosphorylase (322 aa).

Active-site residues include histidine 146 and lysine 167. 161 to 168 (GDSGLGKS) is an ATP binding site. Serine 168 provides a ligand contact to Mg(2+). Aspartate 185 serves as the catalytic Proton acceptor; for phosphorylation activity. Proton donor; for dephosphorylation activity. The interval 209–218 (LEVRGLGLLD) is important for the catalytic mechanism of both phosphorylation and dephosphorylation. Mg(2+) is bound at residue glutamate 210. Arginine 250 is a catalytic residue. The important for the catalytic mechanism of dephosphorylation stretch occupies residues 271–276 (QVAAGR).

Belongs to the HPrK/P family. In terms of assembly, homohexamer. Requires Mg(2+) as cofactor.

It carries out the reaction [HPr protein]-L-serine + ATP = [HPr protein]-O-phospho-L-serine + ADP + H(+). The enzyme catalyses [HPr protein]-O-phospho-L-serine + phosphate + H(+) = [HPr protein]-L-serine + diphosphate. Catalyzes the ATP- as well as the pyrophosphate-dependent phosphorylation of a specific serine residue in HPr, a phosphocarrier protein of the phosphoenolpyruvate-dependent sugar phosphotransferase system (PTS). HprK/P also catalyzes the pyrophosphate-producing, inorganic phosphate-dependent dephosphorylation (phosphorolysis) of seryl-phosphorylated HPr (P-Ser-HPr). In Paraburkholderia xenovorans (strain LB400), this protein is HPr kinase/phosphorylase.